A 348-amino-acid polypeptide reads, in one-letter code: Phosphate acyltransferase (348 aa).

Belongs to the PlsX family. As to quaternary structure, homodimer. Probably interacts with PlsY.

The protein localises to the cytoplasm. The catalysed reaction is a fatty acyl-[ACP] + phosphate = an acyl phosphate + holo-[ACP]. Its pathway is lipid metabolism; phospholipid metabolism. Functionally, catalyzes the reversible formation of acyl-phosphate (acyl-PO(4)) from acyl-[acyl-carrier-protein] (acyl-ACP). This enzyme utilizes acyl-ACP as fatty acyl donor, but not acyl-CoA. This is Phosphate acyltransferase from Pectobacterium carotovorum subsp. carotovorum (strain PC1).